A 430-amino-acid chain; its full sequence is Tektin-2 (430 aa).

Coiled coils occupy residues 80 to 162 (KCLT…FEQL) and 225 to 382 (NKDR…CKAN).

Belongs to the tektin family. In terms of assembly, microtubule inner protein component of sperm flagellar doublet microtubules. May interact with CCDC172. In terms of processing, tyrosine phosphorylated. Post-translationally, ubiquitinated, leading to its degradation. Deubiquitinated by USP16, promoting its stability. In terms of tissue distribution, expressed at high levels in testis, trachea and fetal lung, and at lower levels in ovary, pituitary, adult lung, fetal brain and fetal kidney.

It localises to the cytoplasm. The protein localises to the cytoskeleton. The protein resides in the cilium axoneme. Its subcellular location is the flagellum axoneme. It is found in the microtubule organizing center. Its function is as follows. Microtubule inner protein (MIP) part of the dynein-decorated doublet microtubules (DMTs) in cilia and flagellar axoneme. Plays a key role in the assembly or attachment of the inner dynein arm to microtubules in sperm flagella and tracheal cilia. Forms filamentous polymers in the walls of ciliary and flagellar microtubules. This chain is Tektin-2, found in Homo sapiens (Human).